Reading from the N-terminus, the 181-residue chain is Large ribosomal subunit protein uL5 (181 aa).

It belongs to the universal ribosomal protein uL5 family. Part of the 50S ribosomal subunit; part of the 5S rRNA/L5/L18/L25 subcomplex. Contacts the 5S rRNA and the P site tRNA. Forms a bridge to the 30S subunit in the 70S ribosome.

In terms of biological role, this is one of the proteins that bind and probably mediate the attachment of the 5S RNA into the large ribosomal subunit, where it forms part of the central protuberance. In the 70S ribosome it contacts protein S13 of the 30S subunit (bridge B1b), connecting the 2 subunits; this bridge is implicated in subunit movement. Contacts the P site tRNA; the 5S rRNA and some of its associated proteins might help stabilize positioning of ribosome-bound tRNAs. This is Large ribosomal subunit protein uL5 from Helicobacter pylori (strain G27).